A 283-amino-acid polypeptide reads, in one-letter code: NADPH-dependent 3-dehydrocapnine reductase (283 aa).

Residue Y153 is the Proton acceptor of the active site.

It belongs to the short-chain dehydrogenases/reductases (SDR) family.

The catalysed reaction is 3-oxocapnine + NADPH + H(+) = capnine + NADP(+). Its pathway is lipid metabolism. Reductase involved in the biosynthesis of capnine, a sulfonolipid present in the outer membrane of gliding Bacteroidetes and essential for gliding motility. Catalyzes the reduction of 3-dehydrocapnine to capnine. The polypeptide is NADPH-dependent 3-dehydrocapnine reductase (Ornithobacterium rhinotracheale).